A 102-amino-acid polypeptide reads, in one-letter code: RNA-binding protein Hfq (102 aa).

The Sm domain maps to 9–68 (DPFLNALRRERVPVSIYLVNGIKLQGQIESFDQFVILLKNTVSQMVYKHAISTVVPSRPV). A disordered region spans residues 63–102 (VPSRPVSHHSNNAGGGTSNNYHHGSNAQGSGAQQDSEETE). Over residues 70 to 96 (HHSNNAGGGTSNNYHHGSNAQGSGAQQ) the composition is skewed to polar residues.

This sequence belongs to the Hfq family. Homohexamer.

Its function is as follows. RNA chaperone that binds small regulatory RNA (sRNAs) and mRNAs to facilitate mRNA translational regulation in response to envelope stress, environmental stress and changes in metabolite concentrations. Also binds with high specificity to tRNAs. The protein is RNA-binding protein Hfq of Salmonella arizonae (strain ATCC BAA-731 / CDC346-86 / RSK2980).